Reading from the N-terminus, the 157-residue chain is uncharacterized protein (157 aa).

The chain crosses the membrane as a helical span at residues 42–64; that stretch reads SCIRLIVMFICVAMITCPNSLRF.

It is found in the membrane. This is an uncharacterized protein from Saccharomyces cerevisiae (strain ATCC 204508 / S288c) (Baker's yeast).